The primary structure comprises 84 residues: U21-theraphotoxin-Cg1a 1 (84 aa).

Residues 1–21 form the signal peptide; it reads MKVSVLITLAVLGVMFLLTSA. A propeptide spanning residues 22–47 is cleaved from the precursor; that stretch reads EERGSDQMDSPAWLKSMEIIFQSEER. 3 cysteine pairs are disulfide-bonded: Cys49–Cys63, Cys56–Cys68, and Cys62–Cys76. Val82 is subject to Valine amide.

This sequence belongs to the neurotoxin 10 (Hwtx-1) family. 05 (F4a) subfamily. As to expression, expressed by the venom gland.

The protein localises to the secreted. Functionally, probable ion channel inhibitor. The polypeptide is U21-theraphotoxin-Cg1a 1 (Chilobrachys guangxiensis (Chinese earth tiger tarantula)).